The primary structure comprises 346 residues: MTDSYGAVSVDVGTIYLGGKEHRVKTASGVVSVIVYGDREKPALITYPDLALNHMSCFQGLFFCPEAASLLLHNFCIYHISPPGHELGAAPICPNDSVPSAENLADQILEVLNFFGLGVVMCMGVTAGAYILTLFAMKHRERVLGLILVSPLCKAPSWSEWFYNKVITNLLYYYGMCGVVKEFLLQRYFSKEVRGNVEIPESDIAQACRRLLDERQGINVLRFLDAIDRRPDISSGLKKLKCRTLIFIGDQSPFYSEAVHMAATLDRGYCALVEVQACGSMVTEEQPHAMLIPMEYFLMGYGLYRPSLFSESPRSPLSPSCISPELLSPESMGLKLKPIKTRISAA.

This sequence belongs to the NDRG family. Interacts with GB1. Interacts with the heterodimers formed by GB1 and GG1, or GB1 and GG2. Interacts with RGS1. In terms of tissue distribution, expressed in root vasculature, cotyledons, leaves, petals, mature stamens and pollen grains.

The protein resides in the cytoplasm. Its function is as follows. Interacts with the heterotrimeric G protein beta subunit GB1 and plays an significant role in GB1-dependent regulation of lateral root formation. Involved in a signaling pathway that modulates root auxin transport and auxin gradients. Acts partially by positively regulating the auxin carrier PIN2 and AUX1. Acts, together with GB1 as positive regulator of meristem initiation and branching. GB1 and NDL1 positively regulate basipetal inflorescence auxin transport and modulate MAX2 expression in shoots, which regulates organ and lateral meristem formation by the establishment and maintenance of auxin gradients. This is Protein NDL1 from Arabidopsis thaliana (Mouse-ear cress).